A 705-amino-acid polypeptide reads, in one-letter code: MVCHRYLLGLGASTLCLRRLAQYPSTEYHGIASRHRSPGYYAYILGNFNISNEEQLFSSVHSLANNDSDVLPVEDNGTTNLTGTGEATSETGKEEEVVNEPYNGNRMRNFCIIAHVDHGKSTLADRFLELTKAVEPHEIQGQYLDNMELERERGITIKLQSALIKYTYPKDGQVYSLNLIDTPGHIDFNHEARRSIAACEGAILVVDGTKGIQAQTVTTSMIAIEAGLKLIPVVNKIDVPFCDYESTVADLTSLFDFSEDEILMASAKEGFGINEILDAVVERIPPPKINLDRPFRALVFDSQYDPHRGVVSYVRVSDGIIKKLDDVVFLGHNLESRITAVGVMMPELRERDVLRSGEVGWLCSNTKDPSKVAVGDTVALKSAVKDNNVEPLVAFAPAKPSVFAGLYPCDGSDYMRLSVALEKLKLNDHSIVFEPSESSIAGHGFKCGFNGLLHLDVTVQRLQREFDVGVIVTSPSVPYKCILKNGKEITVSDAAHWPEEGMVKVSMEPWTNVTVRIPGDCHKKVSNLLTQMRGEFQKKSEFAGGKSLVLEYKVPMIEIISTFFDNLKSMTNGFGSFDYEGTEYREIDLCKLRVLINGEEAGGLSMLVARDNAYKSGRLLVETLREVIPPKQFKINLQAAIGKRVIAALSIPALRKNVTERCSGGDPSRKRKLLENQAKGKKYMAEIGNVSIPFDAYKAVHKALR.

The transit peptide at 1–20 directs the protein to the mitochondrion; the sequence is MVCHRYLLGLGASTLCLRRL. Residues 72–92 form a disordered region; sequence PVEDNGTTNLTGTGEATSETG. The segment covering 76–90 has biased composition (polar residues); the sequence is NGTTNLTGTGEATSE. A tr-type G domain is found at 105 to 288; the sequence is NRMRNFCIIA…AVVERIPPPK (184 aa). GTP is bound by residues 114 to 121, 181 to 185, and 235 to 238; these read AHVDHGKS, DTPGH, and NKID.

The protein belongs to the TRAFAC class translation factor GTPase superfamily. Classic translation factor GTPase family. LepA subfamily.

The protein localises to the mitochondrion inner membrane. The enzyme catalyses GTP + H2O = GDP + phosphate + H(+). Its function is as follows. Promotes mitochondrial protein synthesis. May act as a fidelity factor of the translation reaction, by catalyzing a one-codon backward translocation of tRNAs on improperly translocated ribosomes. Binds to mitochondrial ribosomes in a GTP-dependent manner. This chain is Translation factor GUF1 homolog, mitochondrial, found in Babesia bovis.